A 2879-amino-acid chain; its full sequence is Peramine synthetase ppzA (2879 aa).

Residues 1 to 12 are compositionally biased toward basic and acidic residues; sequence MTYDEGGHRNNE. The tract at residues 1 to 52 is disordered; sequence MTYDEGGHRNNEETPQDVNMSSNNEGMSTSSPTGSYGEIIGQATVSVPQEDQ. A compositionally biased stretch (polar residues) spans 16 to 34; it reads QDVNMSSNNEGMSTSSPTG. The interval 351–747 is adenylation 1; it reads QEQCRLQPNT…VGRKDTQVKI (397 aa). The region spanning 882–958 is the Carrier 1 domain; the sequence is QPLSDMERLL…DLSRQSKYIE (77 aa). Ser-919 carries the post-translational modification O-(pantetheine 4'-phosphoryl)serine. Residues 997–1410 form a condensation region; sequence DAYPCTPLQE…ITILTTEDLE (414 aa). Positions 1433–1827 are adenylation 2; that stretch reads DKVQHRPNAP…LSFVRRKDTT (395 aa). Positions 1958–2050 are methylation (Met) domain; the sequence is LEIGCGSGMM…KYLVKLIQDI (93 aa). In terms of domain architecture, Carrier 2 spans 2370–2448; sequence WPTTDTGKEL…RLLLDCCCDD (79 aa). At Ser-2407 the chain carries O-(pantetheine 4'-phosphoryl)serine. The segment at 2500-2817 is thiesterase (TE) domain; that stretch reads TVLLTGANGF…LEDMLQDLDD (318 aa).

It belongs to the NRP synthetase family. Pantetheine 4'-phosphate serves as cofactor.

The enzyme catalyses (S)-1-pyrroline-5-carboxylate + L-arginine + S-adenosyl-L-methionine + 2 ATP = peramine + 2 AMP + S-adenosyl-L-homocysteine + 2 diphosphate + H2O + 2 H(+). Its pathway is secondary metabolite biosynthesis. In terms of biological role, nonribosomal peptide synthetase; part of the gene cluster that mediates the biosynthesis of pyrrolopyrazines, secondary metabolites showing insecticidal activity. The single multifunctional NRPS ppzA is responsible for the biosynthesis of peramine. The condensation domain of ppzA is proposed to catalyze formation of a peptide bond between 1-pyrroline-5-carboxylate and arginine. The methylation domain of ppzA would catalyze the N-methylation of the alpha-amino group of arginine. The reductase domain is proposed to be responsible for reduction of the thioester and the cyclization to form an iminium ion resulting in release from the peptide synthetase. Deprotonation of this intermediate and oxidation of the pyrroline ring would give rise to peramine. This final oxidation to give the pyrrole functionality may be spontaneous. In Epichloe species that produce only peramine, the peramine synthetase gene is not localized in a gene cluster, in contrast to Metarhizium species that contain additional pyrrolopyrazine biosynthesis genes. The 2-oxoglutarate-Fe(II) type oxidoreductase ppzC hydroxylates peramine to yield the newly identified compound 8-hydroxyperamine whereas ppzD converts L-proline into trans-4-hydroxy-L-proline, a precursor of peramine biosynthesis. The chain is Peramine synthetase ppzA from Metarhizium rileyi (strain RCEF 4871) (Nomuraea rileyi).